Reading from the N-terminus, the 827-residue chain is Protein Jade-1 (827 aa).

The tract at residues 1 to 35 (MKRVCLPSSSEDSDDNGSLSTSWSQHSRSLPSFRH) is disordered. Residues 16–30 (NGSLSTSWSQHSRSL) show a composition bias toward polar residues. A PHD-type 1 zinc finger spans residues 200–250 (DVVCDVCQSPDGEDGNEMVFCDKCNICVHQACYGILKVPEGSWLCRTCALG). The segment at 252–286 (QPKCLLCPKKGGAMKPTRSGTKWVHVSCALWIPEV) adopts a C2HC pre-PHD-type zinc-finger fold. Residues 310-366 (LLCSLCNEKVGACIQCSIKNCRTAFHVTCAFDHGLEMKTILTQEDEVKFKSYCPKHG) form a PHD-type 2 zinc finger. 2 disordered regions span residues 622-705 (TVAK…SSSL) and 769-810 (RTKE…SSSS). Basic and acidic residues-rich tracts occupy residues 646–661 (SRTQ…EKPL) and 669–682 (KHTE…EKKR). A compositionally biased stretch (polar residues) spans 692–705 (ATASSNKKQCSSSL).

Belongs to the JADE family. In terms of assembly, component of the HBO1 complex composed.

The protein localises to the nucleus. Its subcellular location is the chromosome. It is found in the cytoplasm. The protein resides in the cytoskeleton. It localises to the cilium basal body. In terms of biological role, scaffold subunit of some HBO1 complexes, which have a histone H4 acetyltransferase activity. Plays a key role in HBO1 complex by directing KAT7/HBO1 specificity towards histone H4 acetylation (H4K5ac, H4K8ac and H4K12ac), regulating DNA replication initiation, regulating DNA replication initiation. This chain is Protein Jade-1 (jade1), found in Xenopus laevis (African clawed frog).